The primary structure comprises 522 residues: Signal transduction histidine-protein kinase/phosphatase MprB (522 aa).

The Cytoplasmic portion of the chain corresponds to 1–30; sequence MIRLHRPQRPPLRAPLRATPSLSLRWRVML. Residues 31-51 traverse the membrane as a helical segment; sequence LAMSMVAMVVVLMAFAVYAVI. Residues 52 to 167 are Extracellular-facing; that stretch reads SAALYSDIDN…PTEAVMNKLR (116 aa). A helical membrane pass occupies residues 168-188; sequence WVLLIVGGVGVAVAAVAGGMV. At 189–522 the chain is on the cytoplasmic side; sequence TRAGLRPVAR…SVDSQSARAR (334 aa). The HAMP domain occupies 190–242; sequence RAGLRPVARLTEAAERVARTDDLRPIPVFGSDELARLTESFNLMLRALAESRE. The Histidine kinase domain maps to 250-470; the sequence is DAGHELRTPL…SFYVLLPGRP (221 aa). Phosphohistidine; by autocatalysis is present on His-253. The disordered stretch occupies residues 468 to 522; the sequence is GRPLPPAGHSTPAGESETDKAEAATDPAVPVAGDTANSRESANVISVDSQSARAR. Residues 502-522 are compositionally biased toward polar residues; sequence TANSRESANVISVDSQSARAR.

The cofactor is Mg(2+). Mn(2+) serves as cofactor. In terms of processing, autophosphorylated.

It localises to the cell membrane. The enzyme catalyses ATP + protein L-histidine = ADP + protein N-phospho-L-histidine.. In terms of biological role, member of the two-component regulatory system MprB/MprA which contributes to maintaining a balance among several systems involved in stress resistance and is required for establishment and maintenance of persistent infection in the host. In response to environmental signals MprB acts both as a membrane-associated protein kinase that undergoes autophosphorylation and subsequently transfers the phosphate to MprA, and a protein phosphatase that dephosphorylates phospho-MprA. This chain is Signal transduction histidine-protein kinase/phosphatase MprB (mprB), found in Mycobacterium avium (strain 104).